Consider the following 928-residue polypeptide: MYCBP-associated protein (928 aa).

Disordered regions lie at residues 1–38 and 164–183; these read MKKA…PVSN and EEPK…APPL. The segment covering 164–177 has biased composition (basic and acidic residues); it reads EEPKPKSPKEEKRP. Phosphoserine is present on Ser557. A Phosphothreonine modification is found at Thr558. Ser564 is subject to Phosphoserine. Residues 786–881 are disordered; that stretch reads IPDEGQKSPP…SSATSQEPID (96 aa). A compositionally biased stretch (basic and acidic residues) spans 806–865; sequence LGKEDRRGGAQEKKQLSARDKEEKKGSKTPSKEDRLNSKKQKAKDDKKVVKSTSRDRLLS.

In terms of assembly, interacts with MYCBP. Expressed in brain, retina, testis, heart and lung. Not detected in liver, kidney or intestine. In brain, highly abundant in CNS neurons of the hippocampus and cerebellum. Strongly expressed in cochlea and vestibular sensory epithelia. In both the organ of Corti and the vestibular organ, expression is restricted to hair cells.

It is found in the cytoplasm. The protein localises to the membrane. In terms of biological role, may play a role in spermatogenesis. May be involved in synaptic processes. The polypeptide is MYCBP-associated protein (Rattus norvegicus (Rat)).